The sequence spans 318 residues: Phosphoenolpyruvate transferase (318 aa).

D50 lines the 7,8-didemethyl-8-hydroxy-5-deazariboflavin pocket.

This sequence belongs to the CofD family. In terms of assembly, homodimer. Mg(2+) serves as cofactor.

The enzyme catalyses enolpyruvoyl-2-diphospho-5'-guanosine + 7,8-didemethyl-8-hydroxy-5-deazariboflavin = dehydro coenzyme F420-0 + GMP + H(+). Its pathway is cofactor biosynthesis; coenzyme F420 biosynthesis. Catalyzes the transfer of the phosphoenolpyruvate moiety from enoylpyruvoyl-2-diphospho-5'-guanosine (EPPG) to 7,8-didemethyl-8-hydroxy-5-deazariboflavin (FO) with the formation of dehydro coenzyme F420-0 and GMP. The chain is Phosphoenolpyruvate transferase from Streptomyces griseus subsp. griseus (strain JCM 4626 / CBS 651.72 / NBRC 13350 / KCC S-0626 / ISP 5235).